A 205-amino-acid polypeptide reads, in one-letter code: uncharacterized protein (205 aa).

5 helical membrane-spanning segments follow: residues 5 to 25, 41 to 61, 68 to 88, 117 to 137, and 147 to 167; these read VWLA…SGTV, GAII…GIGI, SALA…WLGI, LINL…PQFI, and FLVL…GYTA.

The protein belongs to the Rht family.

It localises to the cell inner membrane. Its function is as follows. Involved in positive regulation of motility and negative regulation of biofilm formation. This is an uncharacterized protein from Vibrio cholerae serotype O1 (strain ATCC 39315 / El Tor Inaba N16961).